Here is a 498-residue protein sequence, read N- to C-terminus: Probable malate:quinone oxidoreductase 2 (498 aa).

Belongs to the MQO family. FAD serves as cofactor.

It catalyses the reaction (S)-malate + a quinone = a quinol + oxaloacetate. It participates in carbohydrate metabolism; tricarboxylic acid cycle; oxaloacetate from (S)-malate (quinone route): step 1/1. This Staphylococcus epidermidis (strain ATCC 35984 / DSM 28319 / BCRC 17069 / CCUG 31568 / BM 3577 / RP62A) protein is Probable malate:quinone oxidoreductase 2.